A 1464-amino-acid polypeptide reads, in one-letter code: Glutamate receptor ionotropic, NMDA 2A (1464 aa).

A signal peptide spans 1 to 22; sequence MGRVGYWTLLVLPALLVWRGPA. Residues 23–556 are Extracellular-facing; it reads PSAAAEKGPP…SAFLEPFSAS (534 aa). Residue histidine 44 coordinates Zn(2+). N-linked (GlcNAc...) asparagine glycosylation is present at asparagine 75. A disulfide bridge connects residues cysteine 87 and cysteine 320. Zn(2+) is bound by residues histidine 128, glutamate 266, and aspartate 282. N-linked (GlcNAc...) asparagine glycans are attached at residues asparagine 340, asparagine 380, asparagine 443, and asparagine 444. 2 disulfide bridges follow: cysteine 429-cysteine 455 and cysteine 436-cysteine 456. L-glutamate-binding residues include serine 511, threonine 513, and arginine 518. A glycan (N-linked (GlcNAc...) asparagine) is linked at asparagine 541. The helical transmembrane segment at 557-576 threads the bilayer; that stretch reads VWVMMFVMLLIVSAIAVFVF. Residues 577-600 lie on the Cytoplasmic side of the membrane; the sequence is EYFSPVGYNRNLAKGKAPHGPSFT. Positions 599–620 are pore-forming; the sequence is FTIGKAIWLLWGLVFNNSVPVQ. Residues 601–615 constitute an intramembrane region (discontinuously helical); it reads IGKAIWLLWGLVFNN. The Cytoplasmic segment spans residues 616–625; the sequence is SVPVQNPKGT. A helical membrane pass occupies residues 626–646; it reads TSKIMVSVWAFFAVIFLASYT. Residues 647–814 lie on the Extracellular side of the membrane; the sequence is ANLAAFMIQE…NEVMSSQLDI (168 aa). Asparagine 687 is a glycosylation site (N-linked (GlcNAc...) asparagine). L-glutamate contacts are provided by serine 689, threonine 690, and aspartate 731. A disulfide bridge links cysteine 745 with cysteine 800. A helical transmembrane segment spans residues 815–835; the sequence is DNMAGVFYMLAAAMALSLITF. Over 836-1464 the chain is Cytoplasmic; it reads IWEHLFYWKL…KKMPSIESDV (629 aa). A phosphoserine mark is found at serine 882, serine 890, and serine 929. 2 stretches are compositionally biased toward polar residues: residues 1001–1010 and 1023–1032; these read STESKVNSRP and QDSLSQNPVS. 2 disordered regions span residues 1001–1088 and 1148–1180; these read STES…NFKR and PDPYQDPSENLRKGDSTLPMNRNPLQNEEGLSN. Serine 1025 is subject to Phosphoserine. Composition is skewed to basic and acidic residues over residues 1033–1043 and 1052–1061; these read QRDEATAENRT and LPEEMAHSDI. Serine 1059 and serine 1062 each carry phosphoserine. The segment covering 1070–1087 has biased composition (basic and acidic residues); sequence CHREPDNSKNPKTKDNFK. The span at 1165 to 1180 shows a compositional bias: polar residues; that stretch reads LPMNRNPLQNEEGLSN. Phosphoserine is present on residues serine 1198 and serine 1291. A disordered region spans residues 1335–1372; that stretch reads KLSGKKSSLFPQGLEDSKRSKSLLPDHTSDNPFLHSHR. The short motif at 1462–1464 is the PDZ-binding element; that stretch reads SDV.

Belongs to the glutamate-gated ion channel (TC 1.A.10.1) family. NR2A/GRIN2A subfamily. In terms of assembly, heterotetramer. Forms heterotetrameric channels composed of two GluN1/zeta subunits (GRIN1), and two identical GluN2/epsilon subunits (GRIN2A, GRIN2B, GRIN2C or GRIN2D) or GluN3 subunits (GRIN3A or GRIN3B) (in vitro). Can also form heterotetrameric channels that contain at least two GluN1 subunits and at least two different GluN2 subunits (or a combination of one GluN2 and one GluN3 subunits) (in vitro). In vivo, the subunit composition may depend on the expression levels of the different subunits. Found in a complex with GRIN1, GRIN3A and PPP2CB. Found in a complex with GRIN1 and GRIN3B. Interacts with AIP1. Interacts with HIP1 and NETO1. Interacts with SNX27 (via PDZ domain); the interaction is required for recycling to the plasma membrane when endocytosed and prevent degradation in lysosomes. Interacts with PDZ domains of PATJ and DLG4. Interacts with LRFN2. Interacts with RPH3A and DLG4; this ternary complex regulates NMDA receptor composition at postsynaptic membranes. Interacts with SORCS2. Interacts with ARC; preventing ARC oligomerization. Interacts (via the extreme C-terminus) with FRMPD2 (the second PDZ domain); the interaction is direct and is likely to promote NMDAR-mediated neural signal transmission. GRIN2A binds FRMPD2 with lower affinity than GRIN2B.

Its subcellular location is the cell projection. It is found in the dendritic spine. The protein resides in the cell membrane. It localises to the synapse. The protein localises to the postsynaptic cell membrane. Its subcellular location is the cytoplasmic vesicle membrane. It carries out the reaction Ca(2+)(in) = Ca(2+)(out). The enzyme catalyses Na(+)(in) = Na(+)(out). The catalysed reaction is K(+)(in) = K(+)(out). In terms of biological role, component of N-methyl-D-aspartate (NMDA) receptors (NMDARs) that function as heterotetrameric, ligand-gated cation channels with high calcium permeability and voltage-dependent block by Mg(2+). NMDARs participate in synaptic plasticity for learning and memory formation by contributing to the slow phase of excitatory postsynaptic current, long-term synaptic potentiation, and learning. Channel activation requires binding of the neurotransmitter L-glutamate to the GluN2 subunit, glycine or D-serine binding to the GluN1 subunit, plus membrane depolarization to eliminate channel inhibition by Mg(2+). NMDARs mediate simultaneously the potasium efflux and the influx of calcium and sodium. Each GluN2 subunit confers differential attributes to channel properties, including activation, deactivation and desensitization kinetics, pH sensitivity, Ca2(+) permeability, and binding to allosteric modulators. Participates in the synaptic plasticity regulation through activation by the L-glutamate releaseed by BEST1, into the synaptic cleft, upon F2R/PAR-1 activation in astrocyte. The sequence is that of Glutamate receptor ionotropic, NMDA 2A from Pan troglodytes (Chimpanzee).